We begin with the raw amino-acid sequence, 181 residues long: Protein Syd (181 aa).

It belongs to the Syd family.

It localises to the cell inner membrane. Its function is as follows. Interacts with the SecY protein in vivo. May bind preferentially to an uncomplexed state of SecY, thus functioning either as a chelating agent for excess SecY in the cell or as a regulatory factor that negatively controls the translocase function. This Klebsiella pneumoniae subsp. pneumoniae (strain ATCC 700721 / MGH 78578) protein is Protein Syd.